The sequence spans 412 residues: Keratin, type I microfibrillar 48 kDa, component 8C-1 (412 aa).

At Ser-1 the chain carries N-acetylserine. The tract at residues 1–55 (SFNFCLPNLSFRSSCSSRPCVPSSCCGTTLPGACNIPANVGSCNWFCEGSFDGNE) is head. The 312-residue stretch at 55–366 (EKETMQFLND…GLLDSEDCKL (312 aa)) folds into the IF rod domain. Positions 56-90 (KETMQFLNDRLASYLEKVRQLERENAELESRILER) are coil 1A. The linker 1 stretch occupies residues 91 to 101 (SQQQEPLVCPN). Residues 102–202 (YQSYFRTIEE…HEEEVNTLRS (101 aa)) form a coil 1B region. The segment at 203–218 (QLGDRLNVEVDAAPTV) is linker 12. The coil 2 stretch occupies residues 219-362 (DLNRVLNETR…NTYRGLLDSE (144 aa)). The segment at 363 to 412 (DCKLPCNPCATTNACGKTITPCISSPCAPAAPCTPCVPRSRCGPCNSYVR) is tail.

It belongs to the intermediate filament family.

In terms of biological role, wool microfibrillar keratin. This Ovis aries (Sheep) protein is Keratin, type I microfibrillar 48 kDa, component 8C-1.